We begin with the raw amino-acid sequence, 59 residues long: Large ribosomal subunit protein bL32 (59 aa).

Residues 1 to 20 form a disordered region; that stretch reads MAVQQNKKSKSKKGMRRSHD. Basic residues predominate over residues 7–19; that stretch reads KKSKSKKGMRRSH.

It belongs to the bacterial ribosomal protein bL32 family.

This is Large ribosomal subunit protein bL32 from Nitratidesulfovibrio vulgaris (strain DSM 19637 / Miyazaki F) (Desulfovibrio vulgaris).